Here is an 87-residue protein sequence, read N- to C-terminus: MVNMKASMFLTFAGLVLLFVVSYASESEEKEFPKEMLSSIFAVDNDFKQEERDCAGYMRECKEKLCCSGYVCSSRWKWCVLPAPWRR.

Positions 1–24 (MVNMKASMFLTFAGLVLLFVVSYA) are cleaved as a signal peptide. Residues 25–52 (SESEEKEFPKEMLSSIFAVDNDFKQEER) constitute a propeptide that is removed on maturation. Cystine bridges form between Cys-54–Cys-67, Cys-61–Cys-72, and Cys-66–Cys-79.

Belongs to the neurotoxin 10 (Hwtx-1) family. 51 (Hntx-8) subfamily. Hntx-8 sub-subfamily. Expressed by the venom gland.

The protein resides in the secreted. Its function is as follows. Ion channel inhibitor. In Cyriopagopus hainanus (Chinese bird spider), this protein is U3-theraphotoxin-Hhn1a 7.